A 580-amino-acid polypeptide reads, in one-letter code: Putative Xaa-Pro dipeptidyl-peptidase (580 aa).

Catalysis depends on charge relay system residues Ser-207, Asp-319, and His-350.

Belongs to the peptidase S15 family.

The catalysed reaction is Hydrolyzes Xaa-Pro-|- bonds to release unblocked, N-terminal dipeptides from substrates including Ala-Pro-|-p-nitroanilide and (sequentially) Tyr-Pro-|-Phe-Pro-|-Gly-Pro-|-Ile.. The chain is Putative Xaa-Pro dipeptidyl-peptidase from Bacillus cereus (strain ATCC 14579 / DSM 31 / CCUG 7414 / JCM 2152 / NBRC 15305 / NCIMB 9373 / NCTC 2599 / NRRL B-3711).